A 352-amino-acid polypeptide reads, in one-letter code: Holliday junction branch migration complex subunit RuvB (352 aa).

The large ATPase domain (RuvB-L) stretch occupies residues 13-201 (FSLRKKELRL…FGISQKIEFY (189 aa)). Residues arginine 41, glycine 82, lysine 85, threonine 86, threonine 87, 148–150 (EDF), arginine 191, tyrosine 201, and arginine 238 each bind ATP. Position 86 (threonine 86) interacts with Mg(2+). A small ATPAse domain (RuvB-S) region spans residues 202 to 273 (TYDELKQIIV…LIKKALNSYQ (72 aa)). A head domain (RuvB-H) region spans residues 276–352 (EKGLDSLDRN…KYIDSKNENF (77 aa)). Positions 330 and 335 each coordinate DNA.

Belongs to the RuvB family. As to quaternary structure, homohexamer. Forms an RuvA(8)-RuvB(12)-Holliday junction (HJ) complex. HJ DNA is sandwiched between 2 RuvA tetramers; dsDNA enters through RuvA and exits via RuvB. An RuvB hexamer assembles on each DNA strand where it exits the tetramer. Each RuvB hexamer is contacted by two RuvA subunits (via domain III) on 2 adjacent RuvB subunits; this complex drives branch migration. In the full resolvosome a probable DNA-RuvA(4)-RuvB(12)-RuvC(2) complex forms which resolves the HJ.

The protein resides in the cytoplasm. It catalyses the reaction ATP + H2O = ADP + phosphate + H(+). In terms of biological role, the RuvA-RuvB-RuvC complex processes Holliday junction (HJ) DNA during genetic recombination and DNA repair, while the RuvA-RuvB complex plays an important role in the rescue of blocked DNA replication forks via replication fork reversal (RFR). RuvA specifically binds to HJ cruciform DNA, conferring on it an open structure. The RuvB hexamer acts as an ATP-dependent pump, pulling dsDNA into and through the RuvAB complex. RuvB forms 2 homohexamers on either side of HJ DNA bound by 1 or 2 RuvA tetramers; 4 subunits per hexamer contact DNA at a time. Coordinated motions by a converter formed by DNA-disengaged RuvB subunits stimulates ATP hydrolysis and nucleotide exchange. Immobilization of the converter enables RuvB to convert the ATP-contained energy into a lever motion, pulling 2 nucleotides of DNA out of the RuvA tetramer per ATP hydrolyzed, thus driving DNA branch migration. The RuvB motors rotate together with the DNA substrate, which together with the progressing nucleotide cycle form the mechanistic basis for DNA recombination by continuous HJ branch migration. Branch migration allows RuvC to scan DNA until it finds its consensus sequence, where it cleaves and resolves cruciform DNA. The chain is Holliday junction branch migration complex subunit RuvB from Prochlorococcus marinus (strain MIT 9215).